The primary structure comprises 296 residues: Triplex capsid protein 2 (296 aa).

This sequence belongs to the herpesviridae TRX2 protein family. As to quaternary structure, interacts with TRX1 and major capisd protein/MCP.

Its subcellular location is the virion. The protein localises to the host nucleus. Structural component of the T=16 icosahedral capsid. The capsid is composed of pentamers and hexamers of major capsid protein/MCP, which are linked together by heterotrimers called triplexes. These triplexes are formed by a single molecule of triplex protein 1/TRX1 and two copies of triplex protein 2/TRX2. Additionally, TRX1 is required for efficient transport of TRX2 to the nucleus, which is the site of capsid assembly. The protein is Triplex capsid protein 2 of Human herpesvirus 6A (strain Uganda-1102) (HHV-6 variant A).